The primary structure comprises 413 residues: 2,3-diketo-5-methylthiopentyl-1-phosphate enolase (413 aa).

Lysine 98 serves as the catalytic Proton acceptor. Substrate contacts are provided by residues lysine 147, 173–176 (KDDE), histidine 264, glycine 337, and 359–360 (GG). Mg(2+) contacts are provided by lysine 173, aspartate 175, and glutamate 176. Position 173 is an N6-carboxylysine (lysine 173).

The protein belongs to the RuBisCO large chain family. Type IV subfamily. In terms of assembly, homodimer. Mg(2+) is required as a cofactor.

It carries out the reaction 5-methylsulfanyl-2,3-dioxopentyl phosphate = 2-hydroxy-5-methylsulfanyl-3-oxopent-1-enyl phosphate. It functions in the pathway amino-acid biosynthesis; L-methionine biosynthesis via salvage pathway; L-methionine from S-methyl-5-thio-alpha-D-ribose 1-phosphate: step 3/6. In terms of biological role, catalyzes the enolization of 2,3-diketo-5-methylthiopentyl-1-phosphate (DK-MTP-1-P) into 2-hydroxy-3-keto-5-methylthiopentenyl-1-phosphate (HK-MTPenyl-1-P). In Geobacillus thermodenitrificans (strain NG80-2), this protein is 2,3-diketo-5-methylthiopentyl-1-phosphate enolase.